Consider the following 265-residue polypeptide: Gamma-secretase subunit APH-1A (265 aa).

Topologically, residues 1–2 are lumenal; sequence MG. The chain crosses the membrane as a helical span at residues 3–23; sequence AAVFFGCTFVAFGPAFSLFLI. Over 24–31 the chain is Cytoplasmic; sequence TVAGDPLR. Residues 32-52 traverse the membrane as a helical segment; that stretch reads VIILVAGAFFWLVSLLLASVV. Topologically, residues 53-68 are lumenal; the sequence is WFILVHVTDRSDARLQ. Residues 69 to 89 form a helical membrane-spanning segment; sequence YGLLIFGAAVSVLLQEVFRFA. Residues 90 to 118 lie on the Cytoplasmic side of the membrane; it reads YYKLLKKADEGLASLSEDGRSPISIRQMA. The chain crosses the membrane as a helical span at residues 119–139; that stretch reads YVSGLSFGIISGVFSVINILA. The Lumenal portion of the chain corresponds to 140–158; the sequence is DALGPGVVGIHGDSPYYFL. Residues 159–179 form a helical membrane-spanning segment; the sequence is TSAFLTAAIILLHTFWGVVFF. The Cytoplasmic segment spans residues 180–186; that stretch reads DACERRR. A helical membrane pass occupies residues 187 to 207; sequence YWALGLVVGSHLLTSGLTFLN. Topologically, residues 208–213 are lumenal; sequence PWYEAS. A helical transmembrane segment spans residues 214 to 234; sequence LLPIYAVTVSMGLWAFITAGG. Over 235-265 the chain is Cytoplasmic; it reads SLRSIQRSLSCRRQEDSRVMVYSALRIPPED.

Belongs to the APH-1 family. As to quaternary structure, the functional gamma-secretase complex is composed of at least four polypeptides: a presenilin homodimer (PSEN1 or PSEN2), nicastrin (NCSTN), APH1 (APH1A or APH1B) and PSENEN/PEN2.

Its subcellular location is the endoplasmic reticulum membrane. It is found in the golgi apparatus. The protein resides in the golgi stack membrane. Functionally, non-catalytic subunit of the gamma-secretase complex, an endoprotease complex that catalyzes the intramembrane cleavage of integral membrane proteins such as Notch receptors and APP (amyloid-beta precursor protein). Required for normal gamma-secretase assembly. The gamma-secretase complex plays a role in Notch and Wnt signaling cascades and regulation of downstream processes via its role in processing key regulatory proteins, and by regulating cytosolic CTNNB1 levels. This chain is Gamma-secretase subunit APH-1A (Aph1a), found in Mus musculus (Mouse).